A 1269-amino-acid chain; its full sequence is Protein strawberry notch homolog 1 (1269 aa).

Positions 21 to 47 (NDLFDVDGGDAGLATPTPPSVQQQQPP) are disordered. Lys113 is subject to N6-acetyllysine. Phosphoserine occurs at positions 126 and 178. Lys377 is modified (N6-acetyllysine). Residues 652-725 (PSNNSSPRDS…SLITSQDAVE (74 aa)) are disordered. Residues Ser656, Ser657, and Ser661 each carry the phosphoserine modification. The segment covering 679 to 693 (SGSESDVSDNEESDY) has biased composition (acidic residues). Residues Ser700 and Ser701 each carry the phosphoserine modification. The stretch at 719-746 (TSQDAVERAQQMKKDLLDKLEKLAEDLP) forms a coiled coil. At Lys1098 the chain carries N6-acetyllysine. Ser1262 carries the phosphoserine modification.

The protein belongs to the SBNO family.

The protein localises to the nucleus. Plays a crucial role in the regulation of neural stem cells (NSCs) proliferation. Enhances the phosphorylation of GSK3B through the PI3K-Akt signaling pathway, thereby upregulating the Wnt/beta-catenin signaling pathway and promoting the proliferation of NSCs. Improves ischemic stroke recovery while inhibiting neuroinflammation through small extracellular vesicles (sEVs)-mediated mechanism. Enhances the secretion of sEVs from NSCs, which in turn inhibit both the MAPK and NF-kappaB pathways in microglia. This inhibition suppresses the pro-inflammatory M1 polarization of microglia, promoting a shift towards the M2 anti-inflammatory phenotype, which is beneficial for reducing neuroinflammation. The sequence is that of Protein strawberry notch homolog 1 (Sbno1) from Rattus norvegicus (Rat).